The following is a 122-amino-acid chain: Large ribosomal subunit protein uL14 (122 aa).

It belongs to the universal ribosomal protein uL14 family. As to quaternary structure, part of the 50S ribosomal subunit. Forms a cluster with proteins L3 and L19. In the 70S ribosome, L14 and L19 interact and together make contacts with the 16S rRNA in bridges B5 and B8.

Functionally, binds to 23S rRNA. Forms part of two intersubunit bridges in the 70S ribosome. This chain is Large ribosomal subunit protein uL14, found in Prosthecochloris aestuarii (strain DSM 271 / SK 413).